The chain runs to 443 residues: Probable glutamate dehydrogenase (443 aa).

Residue Lys-86 is part of the active site.

Belongs to the Glu/Leu/Phe/Val dehydrogenases family.

The catalysed reaction is L-glutamate + NAD(+) + H2O = 2-oxoglutarate + NH4(+) + NADH + H(+). It catalyses the reaction L-glutamate + NADP(+) + H2O = 2-oxoglutarate + NH4(+) + NADPH + H(+). This chain is Probable glutamate dehydrogenase, found in Sinorhizobium fredii (strain NBRC 101917 / NGR234).